Consider the following 1021-residue polypeptide: Sodium/potassium-transporting ATPase subunit alpha-1 (1021 aa).

The propeptide occupies 1–5 (MGKGV). Residues 1–11 (MGKGVGRDKYE) are compositionally biased toward basic and acidic residues. Residues 1–36 (MGKGVGRDKYEPAAVSEHGDKKKAKKERDMDELKKE) are disordered. The Cytoplasmic portion of the chain corresponds to 6–85 (GRDKYEPAAV…NALTPPPTTP (80 aa)). Lysine 9 carries the N6-acetyllysine modification. The residue at position 10 (tyrosine 10) is a Phosphotyrosine. At serine 16 the chain carries Phosphoserine; by PKC. Lysine 21 bears the N6-acetyllysine mark. Over residues 26-36 (KERDMDELKKE) the composition is skewed to basic and acidic residues. A phosphoserine mark is found at serine 38 and serine 45. A phosphoinositide-3 kinase binding region spans residues 80-82 (PPP). Residues 86–106 (EWVKFCRQLFGGFSMLLWIGA) form a helical membrane-spanning segment. Residues 107–129 (VLCFLAYGIQAATEEEPQNDNLY) are Extracellular-facing. Residues 130-150 (LGVVLSAVVIITGCFSYYQEA) traverse the membrane as a helical segment. Over 151–286 (KSSKIMESFK…GGQTPIAAEI (136 aa)) the chain is Cytoplasmic. Phosphoserine is present on serine 226. Tyrosine 258 carries the post-translational modification Phosphotyrosine. Residues 287-306 (EHFIHIITGVAVFLGVSFFI) form a helical membrane-spanning segment. Residues 307 to 318 (LSLILEYTWLEA) are Extracellular-facing. A helical membrane pass occupies residues 319 to 336 (VIFLIGIIVANVPEGLLA). At 337 to 770 (TVTVCLTLTA…EEGRLIFDNL (434 aa)) the chain is on the cytoplasmic side. Aspartate 374 acts as the 4-aspartylphosphate intermediate in catalysis. Phosphoserine occurs at positions 450 and 482. Position 485 (lysine 485) interacts with ATP. The residue at position 540 (tyrosine 540) is a Phosphotyrosine. Positions 594-715 (RAAVPDAVGK…QGAIVAVTGD (122 aa)) are mediates interaction with SCN7A. Serine 666 is subject to Phosphoserine. Positions 715 and 719 each coordinate Mg(2+). The helical transmembrane segment at 771–790 (KKSIAYTLTSNIPEITPFLI) threads the bilayer. Over 791–800 (FIIANIPLPL) the chain is Extracellular. Residues 801–821 (GTVTILCIDLGTDMVPAISLA) traverse the membrane as a helical segment. Over 822-841 (YEQAESDIMKRQPRNPQTDK) the chain is Cytoplasmic. Residues 842–864 (LVNERLISMAYGQIGMIQALGGF) traverse the membrane as a helical segment. Topologically, residues 865 to 916 (FTYFVIMAENGFLPNHLLGIRVTWDDRWINDVEDSYGQQWTYEQRKIVEFTC) are extracellular. The chain crosses the membrane as a helical span at residues 917 to 936 (HTAFFVSIVVVQWADLVICK). At 937–949 (TRRNSVFQQGMKN) the chain is on the cytoplasmic side. Serine 941 carries the post-translational modification Phosphoserine; by PKA. The helical transmembrane segment at 950–968 (KILIFGLFEETALAAFLSY) threads the bilayer. Topologically, residues 969-983 (CPGMGVALRMYPLKP) are extracellular. Residues 984 to 1004 (TWWFCAFPYSLLIFVYDEVRK) traverse the membrane as a helical segment. At 1005-1021 (LIIRRRPGGWVEKETYY) the chain is on the cytoplasmic side.

Belongs to the cation transport ATPase (P-type) (TC 3.A.3) family. Type IIC subfamily. The sodium/potassium-transporting ATPase is composed of a catalytic alpha subunit, an auxiliary non-catalytic beta subunit and an additional regulatory subunit. Interacts with regulatory subunit FXYD1. Interacts with regulatory subunit FXYD3. Interacts with SIK1. Interacts with SLC35G1 and STIM1. Interacts with CLN3; this interaction regulates the sodium/potassium-transporting ATPase complex localization at the plasma membrane. Interacts with SCN7A; activates ATP1A1 P-type sodium:potassium-exchanging transporter activity which indirectly signals to nearby neurons to regulate sodium homeostasis. Phosphorylation on Tyr-10 modulates pumping activity. Phosphorylation of Ser-941 by PKA modulates the response of ATP1A1 to PKC. Dephosphorylation by protein phosphatase 2A (PP2A) following increases in intracellular sodium, leading to increase catalytic activity.

The protein resides in the cell membrane. The protein localises to the basolateral cell membrane. It is found in the sarcolemma. It localises to the cell projection. Its subcellular location is the axon. The protein resides in the melanosome. The catalysed reaction is K(+)(out) + Na(+)(in) + ATP + H2O = K(+)(in) + Na(+)(out) + ADP + phosphate + H(+). With respect to regulation, specifically inhibited by cardiac glycosides such as digoxin or ouabain. Its function is as follows. This is the catalytic component of the active enzyme, which catalyzes the hydrolysis of ATP coupled with the exchange of sodium and potassium ions across the plasma membrane. This action creates the electrochemical gradient of sodium and potassium ions, providing the energy for active transport of various nutrients. Could also be part of an osmosensory signaling pathway that senses body-fluid sodium levels and controls salt intake behavior as well as voluntary water intake to regulate sodium homeostasis. The sequence is that of Sodium/potassium-transporting ATPase subunit alpha-1 (ATP1A1) from Ovis aries (Sheep).